We begin with the raw amino-acid sequence, 400 residues long: Tryptophan synthase beta chain (400 aa).

Lys-92 carries the N6-(pyridoxal phosphate)lysine modification.

Belongs to the TrpB family. As to quaternary structure, tetramer of two alpha and two beta chains. The cofactor is pyridoxal 5'-phosphate.

It catalyses the reaction (1S,2R)-1-C-(indol-3-yl)glycerol 3-phosphate + L-serine = D-glyceraldehyde 3-phosphate + L-tryptophan + H2O. It participates in amino-acid biosynthesis; L-tryptophan biosynthesis; L-tryptophan from chorismate: step 5/5. The beta subunit is responsible for the synthesis of L-tryptophan from indole and L-serine. In Neisseria gonorrhoeae (strain NCCP11945), this protein is Tryptophan synthase beta chain.